Here is a 309-residue protein sequence, read N- to C-terminus: tRNA pseudouridine synthase B (309 aa).

The active-site Nucleophile is Asp-51.

This sequence belongs to the pseudouridine synthase TruB family. Type 1 subfamily.

It carries out the reaction uridine(55) in tRNA = pseudouridine(55) in tRNA. In terms of biological role, responsible for synthesis of pseudouridine from uracil-55 in the psi GC loop of transfer RNAs. The protein is tRNA pseudouridine synthase B of Coxiella burnetii (strain RSA 493 / Nine Mile phase I).